The following is a 389-amino-acid chain: tRNA(Met) cytidine acetate ligase (389 aa).

ATP-binding positions include 8 to 21, Gly97, Asn153, and Arg176; that span reads IAEF…HEYL.

The protein belongs to the TmcAL family.

The protein resides in the cytoplasm. The catalysed reaction is cytidine(34) in elongator tRNA(Met) + acetate + ATP = N(4)-acetylcytidine(34) in elongator tRNA(Met) + AMP + diphosphate. In terms of biological role, catalyzes the formation of N(4)-acetylcytidine (ac(4)C) at the wobble position of elongator tRNA(Met), using acetate and ATP as substrates. First activates an acetate ion to form acetyladenylate (Ac-AMP) and then transfers the acetyl group to tRNA to form ac(4)C34. This Lactococcus lactis subsp. cremoris (strain SK11) protein is tRNA(Met) cytidine acetate ligase.